Consider the following 210-residue polypeptide: Ribosomal RNA large subunit methyltransferase E (210 aa).

Residues Gly61, Trp63, Asp81, Asp97, and Asp122 each contribute to the S-adenosyl-L-methionine site. Lys162 (proton acceptor) is an active-site residue. The span at 187-196 shows a compositional bias: basic and acidic residues; the sequence is KPEASRKRSP. The interval 187–210 is disordered; sequence KPEASRKRSPEVYALGQGKRAHMK.

Belongs to the class I-like SAM-binding methyltransferase superfamily. RNA methyltransferase RlmE family.

It is found in the cytoplasm. The catalysed reaction is uridine(2552) in 23S rRNA + S-adenosyl-L-methionine = 2'-O-methyluridine(2552) in 23S rRNA + S-adenosyl-L-homocysteine + H(+). Its function is as follows. Specifically methylates the uridine in position 2552 of 23S rRNA at the 2'-O position of the ribose in the fully assembled 50S ribosomal subunit. This chain is Ribosomal RNA large subunit methyltransferase E, found in Stenotrophomonas maltophilia (strain R551-3).